Reading from the N-terminus, the 549-residue chain is Glucose-6-phosphate isomerase (549 aa).

Catalysis depends on Glu353, which acts as the Proton donor. Residues His384 and Lys510 contribute to the active site.

This sequence belongs to the GPI family.

It is found in the cytoplasm. The enzyme catalyses alpha-D-glucose 6-phosphate = beta-D-fructose 6-phosphate. It participates in carbohydrate biosynthesis; gluconeogenesis. It functions in the pathway carbohydrate degradation; glycolysis; D-glyceraldehyde 3-phosphate and glycerone phosphate from D-glucose: step 2/4. Catalyzes the reversible isomerization of glucose-6-phosphate to fructose-6-phosphate. In Mycolicibacterium smegmatis (strain ATCC 700084 / mc(2)155) (Mycobacterium smegmatis), this protein is Glucose-6-phosphate isomerase.